A 464-amino-acid polypeptide reads, in one-letter code: ATP synthase subunit beta (464 aa).

148–155 (GGAGVGKT) is an ATP binding site.

The protein belongs to the ATPase alpha/beta chains family. As to quaternary structure, F-type ATPases have 2 components, CF(1) - the catalytic core - and CF(0) - the membrane proton channel. CF(1) has five subunits: alpha(3), beta(3), gamma(1), delta(1), epsilon(1). CF(0) has three main subunits: a(1), b(2) and c(9-12). The alpha and beta chains form an alternating ring which encloses part of the gamma chain. CF(1) is attached to CF(0) by a central stalk formed by the gamma and epsilon chains, while a peripheral stalk is formed by the delta and b chains.

The protein localises to the cell inner membrane. The catalysed reaction is ATP + H2O + 4 H(+)(in) = ADP + phosphate + 5 H(+)(out). Produces ATP from ADP in the presence of a proton gradient across the membrane. The catalytic sites are hosted primarily by the beta subunits. The sequence is that of ATP synthase subunit beta from Marinobacter nauticus (strain ATCC 700491 / DSM 11845 / VT8) (Marinobacter aquaeolei).